The sequence spans 414 residues: E3 ubiquitin-protein ligase makorin-2 (414 aa).

2 C3H1-type zinc fingers span residues 2–29 (STKQ…HDLT) and 31–58 (SKPS…HIKP). Residues 57–94 (KPPGRGSGAPADHSNRSSSSAGASAPGPGPPANTSKHL) are disordered. The segment covering 73–82 (SSSSAGASAP) has biased composition (low complexity). The segment at 164–191 (QTSPQICPFLAAGQCQYGESCPYLHGEM) adopts a C3H1-type 3 zinc-finger fold. Residues 192–221 (CEICRQHVLHPHDPEQRAAHEKKCMVAFEM) are makorin-type Cys-His. The RING-type zinc finger occupies 237 to 291 (CKICLDVVYEKSSPSERRFGILSSCAHTYCLNCIRQWRCVEQLHNQIRKSCPECR). Residues 320–349 (GVSKKACKYFDQGRGTCPFGGKCFYMHAYA) form a C3H1-type 4 zinc finger.

The protein localises to the cytoplasm. The protein resides in the nucleus. The catalysed reaction is S-ubiquitinyl-[E2 ubiquitin-conjugating enzyme]-L-cysteine + [acceptor protein]-L-lysine = [E2 ubiquitin-conjugating enzyme]-L-cysteine + N(6)-ubiquitinyl-[acceptor protein]-L-lysine.. The protein operates within protein modification; protein ubiquitination. In terms of biological role, E3 ubiquitin ligase catalyzing the covalent attachment of ubiquitin moieties onto substrate proteins. Inhibits neurogenesis and axis formation during embryonic development by modulating the phosphatidylinositol 3-kinase (PI3K) pathway. Acts downstream of PI3K and akt1 to up-regulate gsk3b mRNA expression. This Danio rerio (Zebrafish) protein is E3 ubiquitin-protein ligase makorin-2 (mkrn2).